Reading from the N-terminus, the 96-residue chain is Protein TraA (96 aa).

In Escherichia coli, this protein is Protein TraA (traA).